Reading from the N-terminus, the 30-residue chain is 2-enoate reductase (30 aa).

In terms of assembly, dodecamer; tetramer of trimers. Requires iron-sulfur cluster as cofactor. FAD is required as a cofactor. FMN serves as cofactor.

It catalyses the reaction butanoate + NAD(+) = (2E)-2-butenoate + NADH + H(+). Involved in fermentation of amino acids (Stickland reaction) such as leucine, isoleucine, valine and phenylalanine. In Clostridium tyrobutyricum, this protein is 2-enoate reductase.